The chain runs to 528 residues: Tyrosine--tRNA ligase, cytoplasmic (528 aa).

M1 is subject to N-acetylmethionine. An N-acetylglycine; in Tyrosine--tRNA ligase, cytoplasmic, N-terminally processed modification is found at G2. Y39 provides a ligand contact to L-tyrosine. Trans-resveratrol is bound at residue Y39. The 'HIGH' region signature appears at 44 to 52 (TTGKPHVAY). Residues Y166, Q170, D173, and Q188 each contribute to the L-tyrosine site. Residues Q170 and D173 each contribute to the trans-resveratrol site. K197 bears the N6-acetyllysine mark. S205 carries the post-translational modification Phosphoserine. The residue at position 206 (K206) is an N6-acetyllysine. The 'KMSKS' region motif lies at 222 to 226 (KMSSS). A Nuclear localization signal motif is present at residues 242–247 (KKKLKK). Residues 339–363 (AAYPDPSKQKPMAKGPAKNSEPEEV) are disordered. The region spanning 364 to 468 (IPSRLDIRVG…AGSAPGEHVF (105 aa)) is the tRNA-binding domain. S386 carries the phosphoserine modification. An N6-acetyllysine mark is found at K474, K482, and K490.

Belongs to the class-I aminoacyl-tRNA synthetase family. Homodimer. Interacts (when binding to resveratrol) with PARP1; interaction stimulates the poly-ADP-ribosyltransferase activity of PARP1.

It is found in the cytoplasm. Its subcellular location is the nucleus. The enzyme catalyses tRNA(Tyr) + L-tyrosine + ATP = L-tyrosyl-tRNA(Tyr) + AMP + diphosphate + H(+). Resveratrol strongly inhibits the tyrosine--tRNA ligase activity. Functionally, tyrosine--tRNA ligase that catalyzes the attachment of tyrosine to tRNA(Tyr) in a two-step reaction: tyrosine is first activated by ATP to form Tyr-AMP and then transferred to the acceptor end of tRNA(Tyr). Also acts as a positive regulator of poly-ADP-ribosylation in the nucleus, independently of its tyrosine--tRNA ligase activity. Activity is switched upon resveratrol-binding: resveratrol strongly inhibits the tyrosine--tRNA ligase activity and promotes relocalization to the nucleus, where YARS1 specifically stimulates the poly-ADP-ribosyltransferase activity of PARP1. This Homo sapiens (Human) protein is Tyrosine--tRNA ligase, cytoplasmic.